A 262-amino-acid polypeptide reads, in one-letter code: MQVDLLSSAQSAHALHLFHKHSPLVHCMTNDVVQTFTANTLLALGASPAMVIETEEASQFAAIASALLINVGTLTQPRAQAMRAAVEQAKRSQTPWTLDPVAVGALDYRRRFCLELLSHKPTAIRGNASEIMALAGVANGGRGVDTTDAAANAIPAAQTLARETGAIVVVTGEVDYVTDGHRIVGIHGGDPLMTKVVGTGCALSAVVAACCALPGDTLENIAFACHWMKQAGERAVARSEGPGSFVPHFLDALWQLTQEVQA.

Met-50 contacts substrate. ATP is bound by residues Arg-125 and Thr-171. Gly-198 provides a ligand contact to substrate.

It belongs to the Thz kinase family. Mg(2+) is required as a cofactor.

The enzyme catalyses 5-(2-hydroxyethyl)-4-methylthiazole + ATP = 4-methyl-5-(2-phosphooxyethyl)-thiazole + ADP + H(+). It functions in the pathway cofactor biosynthesis; thiamine diphosphate biosynthesis; 4-methyl-5-(2-phosphoethyl)-thiazole from 5-(2-hydroxyethyl)-4-methylthiazole: step 1/1. Catalyzes the phosphorylation of the hydroxyl group of 4-methyl-5-beta-hydroxyethylthiazole (THZ). This chain is Hydroxyethylthiazole kinase, found in Escherichia coli (strain SMS-3-5 / SECEC).